We begin with the raw amino-acid sequence, 112 residues long: Large ribosomal subunit protein uL22 (112 aa).

It belongs to the universal ribosomal protein uL22 family. In terms of assembly, part of the 50S ribosomal subunit.

Its function is as follows. This protein binds specifically to 23S rRNA; its binding is stimulated by other ribosomal proteins, e.g. L4, L17, and L20. It is important during the early stages of 50S assembly. It makes multiple contacts with different domains of the 23S rRNA in the assembled 50S subunit and ribosome. Functionally, the globular domain of the protein is located near the polypeptide exit tunnel on the outside of the subunit, while an extended beta-hairpin is found that lines the wall of the exit tunnel in the center of the 70S ribosome. The polypeptide is Large ribosomal subunit protein uL22 (Moorella thermoacetica (strain ATCC 39073 / JCM 9320)).